A 433-amino-acid polypeptide reads, in one-letter code: 3-phosphoshikimate 1-carboxyvinyltransferase (433 aa).

Positions 22, 23, and 27 each coordinate 3-phosphoshikimate. Phosphoenolpyruvate is bound at residue K22. Phosphoenolpyruvate contacts are provided by G95 and R123. Residues S167, Q169, D315, and K342 each coordinate 3-phosphoshikimate. Q169 serves as a coordination point for phosphoenolpyruvate. D315 functions as the Proton acceptor in the catalytic mechanism. Phosphoenolpyruvate-binding residues include R346 and R387.

The protein belongs to the EPSP synthase family. As to quaternary structure, monomer.

It localises to the cytoplasm. The catalysed reaction is 3-phosphoshikimate + phosphoenolpyruvate = 5-O-(1-carboxyvinyl)-3-phosphoshikimate + phosphate. The protein operates within metabolic intermediate biosynthesis; chorismate biosynthesis; chorismate from D-erythrose 4-phosphate and phosphoenolpyruvate: step 6/7. Catalyzes the transfer of the enolpyruvyl moiety of phosphoenolpyruvate (PEP) to the 5-hydroxyl of shikimate-3-phosphate (S3P) to produce enolpyruvyl shikimate-3-phosphate and inorganic phosphate. The polypeptide is 3-phosphoshikimate 1-carboxyvinyltransferase (Legionella pneumophila (strain Corby)).